The chain runs to 47 residues: Defensin-2 (47 aa).

4 cysteine pairs are disulfide-bonded: cysteine 3–cysteine 47, cysteine 14–cysteine 35, cysteine 20–cysteine 41, and cysteine 24–cysteine 43.

The protein belongs to the DEFL family. As to expression, epidermis and vascular bundles of pods, stems, roots, leaves and wet or dry seeds.

Functionally, possesses antifungal activity sensitive to inorganic cations. In Pisum sativum (Garden pea), this protein is Defensin-2.